We begin with the raw amino-acid sequence, 246 residues long: Biosynthetic peptidoglycan transglycosylase (246 aa).

A helical membrane pass occupies residues 20–42; it reads SLRWVLAAPLLFAAASVLQVLAL.

This sequence belongs to the glycosyltransferase 51 family.

It localises to the cell inner membrane. It catalyses the reaction [GlcNAc-(1-&gt;4)-Mur2Ac(oyl-L-Ala-gamma-D-Glu-L-Lys-D-Ala-D-Ala)](n)-di-trans,octa-cis-undecaprenyl diphosphate + beta-D-GlcNAc-(1-&gt;4)-Mur2Ac(oyl-L-Ala-gamma-D-Glu-L-Lys-D-Ala-D-Ala)-di-trans,octa-cis-undecaprenyl diphosphate = [GlcNAc-(1-&gt;4)-Mur2Ac(oyl-L-Ala-gamma-D-Glu-L-Lys-D-Ala-D-Ala)](n+1)-di-trans,octa-cis-undecaprenyl diphosphate + di-trans,octa-cis-undecaprenyl diphosphate + H(+). It participates in cell wall biogenesis; peptidoglycan biosynthesis. Its function is as follows. Peptidoglycan polymerase that catalyzes glycan chain elongation from lipid-linked precursors. This Xanthomonas campestris pv. campestris (strain 8004) protein is Biosynthetic peptidoglycan transglycosylase.